Here is a 232-residue protein sequence, read N- to C-terminus: Large ribosomal subunit protein uL1 (232 aa).

This sequence belongs to the universal ribosomal protein uL1 family. In terms of assembly, part of the 50S ribosomal subunit.

Functionally, binds directly to 23S rRNA. The L1 stalk is quite mobile in the ribosome, and is involved in E site tRNA release. Protein L1 is also a translational repressor protein, it controls the translation of the L11 operon by binding to its mRNA. The polypeptide is Large ribosomal subunit protein uL1 (Methylobacterium radiotolerans (strain ATCC 27329 / DSM 1819 / JCM 2831 / NBRC 15690 / NCIMB 10815 / 0-1)).